The chain runs to 224 residues: MSNPIYLALDLPRLDAAVALAQKVKGHVGGLKLGLEFFCAHGHHGVHEVAKVGLPIFLDLKLHDIPNTVAGAMQSIHVLEPAIVTIHAGGGRAMMEDAKAAAGEHTKVVAVTVLTSLDDADMSTMGVGGSAYDQAIRLADLAQEAGLDGIVCSGHEVGAIHKRWKNGFFVVPGLRPAEGKLGDQKRAVTPRAARDAGASVLVIGRPISRAEDPVAAARAIEATL.

Substrate is bound by residues D10, K32, 59–68 (DLKLHDIPNT), T115, R175, Q184, G204, and R205. The Proton donor role is filled by K61.

This sequence belongs to the OMP decarboxylase family. Type 1 subfamily. As to quaternary structure, homodimer.

The catalysed reaction is orotidine 5'-phosphate + H(+) = UMP + CO2. The protein operates within pyrimidine metabolism; UMP biosynthesis via de novo pathway; UMP from orotate: step 2/2. In terms of biological role, catalyzes the decarboxylation of orotidine 5'-monophosphate (OMP) to uridine 5'-monophosphate (UMP). This chain is Orotidine 5'-phosphate decarboxylase, found in Novosphingobium aromaticivorans (strain ATCC 700278 / DSM 12444 / CCUG 56034 / CIP 105152 / NBRC 16084 / F199).